A 269-amino-acid chain; its full sequence is 3-methyl-2-oxobutanoate hydroxymethyltransferase (269 aa).

Mg(2+) contacts are provided by Asp-46 and Asp-85. Residues 46-47 (DS), Asp-85, and Lys-114 each bind 3-methyl-2-oxobutanoate. Position 116 (Glu-116) interacts with Mg(2+). The active-site Proton acceptor is the Glu-183.

This sequence belongs to the PanB family. Homodecamer; pentamer of dimers. The cofactor is Mg(2+).

It localises to the cytoplasm. The catalysed reaction is 3-methyl-2-oxobutanoate + (6R)-5,10-methylene-5,6,7,8-tetrahydrofolate + H2O = 2-dehydropantoate + (6S)-5,6,7,8-tetrahydrofolate. It participates in cofactor biosynthesis; (R)-pantothenate biosynthesis; (R)-pantoate from 3-methyl-2-oxobutanoate: step 1/2. Its function is as follows. Catalyzes the reversible reaction in which hydroxymethyl group from 5,10-methylenetetrahydrofolate is transferred onto alpha-ketoisovalerate to form ketopantoate. The polypeptide is 3-methyl-2-oxobutanoate hydroxymethyltransferase (Methylococcus capsulatus (strain ATCC 33009 / NCIMB 11132 / Bath)).